The sequence spans 96 residues: Protein Vpr (96 aa).

The tract at residues 1–42 (MEQAPEDQGPQREPYNEWTLELLEELKSEAVRHFPRLWLHSL) is homooligomerization. Ser79, Ser94, and Ser96 each carry phosphoserine; by host.

This sequence belongs to the HIV-1 VPR protein family. As to quaternary structure, homooligomer, may form homodimer. Interacts with p6-gag region of the Pr55 Gag precursor protein through a (Leu-X-X)4 motif near the C-terminus of the P6gag protein. Interacts with host UNG. May interact with host RAD23A/HHR23A. Interacts with host VPRBP/DCAF1, leading to hijack the CUL4A-RBX1-DDB1-DCAF1/VPRBP complex, mediating ubiquitination of host proteins such as TERT and ZGPAT and arrest of the cell cycle in G2 phase. Phosphorylated on several residues by host. These phosphorylations regulate VPR activity for the nuclear import of the HIV-1 pre-integration complex.

It localises to the virion. Its subcellular location is the host nucleus. The protein localises to the host extracellular space. Its function is as follows. During virus replication, may deplete host UNG protein, and incude G2-M cell cycle arrest. Acts by targeting specific host proteins for degradation by the 26S proteasome, through association with the cellular CUL4A-DDB1 E3 ligase complex by direct interaction with host VPRPB/DCAF-1. Cell cycle arrest reportedly occurs within hours of infection and is not blocked by antiviral agents, suggesting that it is initiated by the VPR carried into the virion. Additionally, VPR induces apoptosis in a cell cycle dependent manner suggesting that these two effects are mechanistically linked. Detected in the serum and cerebrospinal fluid of AIDS patient, VPR may also induce cell death to bystander cells. During virus entry, plays a role in the transport of the viral pre-integration (PIC) complex to the host nucleus. This function is crucial for viral infection of non-dividing macrophages. May act directly at the nuclear pore complex, by binding nucleoporins phenylalanine-glycine (FG)-repeat regions. In Human immunodeficiency virus type 1 group M subtype B (isolate RF/HAT3) (HIV-1), this protein is Protein Vpr.